The chain runs to 285 residues: Putative cuticle collagen 75 (285 aa).

Triple-helical region regions lie at residues 87–116 (GRIG…PGEL) and 133–261 (GPKG…PGLD). The segment covering 207-231 (PGAPGIPGEEGLSGPTGQPGSPGSI) has biased composition (low complexity). The interval 207–257 (PGAPGIPGEEGLSGPTGQPGSPGSIGAMGYEGAYGDRGEPGPPGPIGRRGG) is disordered.

This sequence belongs to the cuticular collagen family. Collagen polypeptide chains are complexed within the cuticle by disulfide bonds and other types of covalent cross-links.

Functionally, nematode cuticles are composed largely of collagen-like proteins. The cuticle functions both as an exoskeleton and as a barrier to protect the worm from its environment. In Caenorhabditis elegans, this protein is Putative cuticle collagen 75 (col-75).